Consider the following 469-residue polypeptide: 3-isopropylmalate dehydratase large subunit (469 aa).

[4Fe-4S] cluster-binding residues include cysteine 349, cysteine 409, and cysteine 412.

Belongs to the aconitase/IPM isomerase family. LeuC type 1 subfamily. Heterodimer of LeuC and LeuD. It depends on [4Fe-4S] cluster as a cofactor.

The catalysed reaction is (2R,3S)-3-isopropylmalate = (2S)-2-isopropylmalate. The protein operates within amino-acid biosynthesis; L-leucine biosynthesis; L-leucine from 3-methyl-2-oxobutanoate: step 2/4. Its function is as follows. Catalyzes the isomerization between 2-isopropylmalate and 3-isopropylmalate, via the formation of 2-isopropylmaleate. The chain is 3-isopropylmalate dehydratase large subunit from Methylorubrum populi (strain ATCC BAA-705 / NCIMB 13946 / BJ001) (Methylobacterium populi).